Reading from the N-terminus, the 317-residue chain is DNA-directed RNA polymerase subunit alpha (317 aa).

The interval 1–234 (MKQFVRPEFI…AHLEFFIDLN (234 aa)) is alpha N-terminal domain (alpha-NTD). Residues 250-317 (DKELDRTVEE…ASLGLAFRQS (68 aa)) form an alpha C-terminal domain (alpha-CTD) region.

Belongs to the RNA polymerase alpha chain family. Homodimer. The RNAP catalytic core consists of 2 alpha, 1 beta, 1 beta' and 1 omega subunit. When a sigma factor is associated with the core the holoenzyme is formed, which can initiate transcription.

It carries out the reaction RNA(n) + a ribonucleoside 5'-triphosphate = RNA(n+1) + diphosphate. Functionally, DNA-dependent RNA polymerase catalyzes the transcription of DNA into RNA using the four ribonucleoside triphosphates as substrates. In Mycoplasma mycoides subsp. mycoides SC (strain CCUG 32753 / NCTC 10114 / PG1), this protein is DNA-directed RNA polymerase subunit alpha.